A 382-amino-acid polypeptide reads, in one-letter code: 3-dehydroquinate synthase (382 aa).

NAD(+) is bound by residues 115 to 119 (GVVGD), 139 to 140 (TS), lysine 152, and lysine 161. Residues glutamate 194, histidine 256, and histidine 274 each coordinate Zn(2+).

The protein belongs to the sugar phosphate cyclases superfamily. Dehydroquinate synthase family. The cofactor is Co(2+). Requires Zn(2+) as cofactor. NAD(+) serves as cofactor.

Its subcellular location is the cytoplasm. The enzyme catalyses 7-phospho-2-dehydro-3-deoxy-D-arabino-heptonate = 3-dehydroquinate + phosphate. It functions in the pathway metabolic intermediate biosynthesis; chorismate biosynthesis; chorismate from D-erythrose 4-phosphate and phosphoenolpyruvate: step 2/7. Its function is as follows. Catalyzes the conversion of 3-deoxy-D-arabino-heptulosonate 7-phosphate (DAHP) to dehydroquinate (DHQ). The protein is 3-dehydroquinate synthase of Rhodopseudomonas palustris (strain BisB18).